Consider the following 188-residue polypeptide: ATP synthase subunit b 1 (188 aa).

Residues 35 to 55 (VHFGSHLFWLAISFGLFYLFI) traverse the membrane as a helical segment.

The protein belongs to the ATPase B chain family. F-type ATPases have 2 components, F(1) - the catalytic core - and F(0) - the membrane proton channel. F(1) has five subunits: alpha(3), beta(3), gamma(1), delta(1), epsilon(1). F(0) has three main subunits: a(1), b(2) and c(10-14). The alpha and beta chains form an alternating ring which encloses part of the gamma chain. F(1) is attached to F(0) by a central stalk formed by the gamma and epsilon chains, while a peripheral stalk is formed by the delta and b chains.

It localises to the cell inner membrane. Its function is as follows. F(1)F(0) ATP synthase produces ATP from ADP in the presence of a proton or sodium gradient. F-type ATPases consist of two structural domains, F(1) containing the extramembraneous catalytic core and F(0) containing the membrane proton channel, linked together by a central stalk and a peripheral stalk. During catalysis, ATP synthesis in the catalytic domain of F(1) is coupled via a rotary mechanism of the central stalk subunits to proton translocation. Functionally, component of the F(0) channel, it forms part of the peripheral stalk, linking F(1) to F(0). The polypeptide is ATP synthase subunit b 1 (Bartonella henselae (strain ATCC 49882 / DSM 28221 / CCUG 30454 / Houston 1) (Rochalimaea henselae)).